We begin with the raw amino-acid sequence, 195 residues long: dTDP-4-dehydrorhamnose 3,5-epimerase (195 aa).

Residues Arg-31, Glu-36, 54-56 (QDN), and Arg-67 each bind substrate. The Proton acceptor role is filled by His-70. Substrate contacts are provided by Lys-80 and His-127. Tyr-140 (proton donor) is an active-site residue. Substrate-binding residues include Asp-151 and Lys-176.

It belongs to the dTDP-4-dehydrorhamnose 3,5-epimerase family. In terms of assembly, homodimer.

The catalysed reaction is dTDP-4-dehydro-6-deoxy-alpha-D-glucose = dTDP-4-dehydro-beta-L-rhamnose. The protein operates within carbohydrate biosynthesis; dTDP-L-rhamnose biosynthesis. Its function is as follows. Catalyzes the epimerization of the C3' and C5'positions of dTDP-6-deoxy-D-xylo-4-hexulose, forming dTDP-6-deoxy-L-lyxo-4-hexulose. The chain is dTDP-4-dehydrorhamnose 3,5-epimerase from Sinorhizobium fredii (strain NBRC 101917 / NGR234).